The sequence spans 502 residues: Cytochrome P450 71A8 (502 aa).

The helical transmembrane segment at 16-36 threads the bilayer; sequence IISHTLAFQALVSLILLISIT. Residues 93–119 are disordered; sequence PVSSRRRPRGNHENSRSRLRRPRGSRS. Cys-447 contributes to the heme binding site.

Belongs to the cytochrome P450 family. Requires heme as cofactor.

It is found in the membrane. The sequence is that of Cytochrome P450 71A8 (CYP71A8) from Mentha piperita (Peppermint).